Here is a 377-residue protein sequence, read N- to C-terminus: N-acetyldiaminopimelate deacetylase (377 aa).

D69 is an active-site residue. Catalysis depends on E128, which acts as the Proton acceptor.

The protein belongs to the peptidase M20A family. N-acetyldiaminopimelate deacetylase subfamily.

The enzyme catalyses N-acetyl-(2S,6S)-2,6-diaminopimelate + H2O = (2S,6S)-2,6-diaminopimelate + acetate. The protein operates within amino-acid biosynthesis; L-lysine biosynthesis via DAP pathway; LL-2,6-diaminopimelate from (S)-tetrahydrodipicolinate (acetylase route): step 3/3. In terms of biological role, catalyzes the conversion of N-acetyl-diaminopimelate to diaminopimelate and acetate. The protein is N-acetyldiaminopimelate deacetylase of Streptococcus gordonii (strain Challis / ATCC 35105 / BCRC 15272 / CH1 / DL1 / V288).